We begin with the raw amino-acid sequence, 839 residues long: Probable inorganic carbon transporter subunit DabA (839 aa).

Zn(2+)-binding residues include Cys353, Asp355, His537, and Cys552.

Belongs to the inorganic carbon transporter (TC 9.A.2) DabA family. Forms a complex with DabB. Requires Zn(2+) as cofactor.

It is found in the cell membrane. Part of an energy-coupled inorganic carbon pump. In Chloroflexus aggregans (strain MD-66 / DSM 9485), this protein is Probable inorganic carbon transporter subunit DabA.